The sequence spans 466 residues: Signal recognition particle 54 kDa protein (466 aa).

Residues 104–111, 184–188, and 242–245 contribute to the GTP site; these read GLQGSGKT, DTAGR, and TKLD. A disordered region spans residues 444–466; sequence MQQGGGGGGGGGGGLGGMGPFGD. Positions 446–466 are enriched in gly residues; it reads QGGGGGGGGGGGLGGMGPFGD.

It belongs to the GTP-binding SRP family. SRP54 subfamily. As to quaternary structure, part of the signal recognition particle protein translocation system, which is composed of SRP and FtsY. Archaeal SRP consists of a 7S RNA molecule of 300 nucleotides and two protein subunits: SRP54 and SRP19.

The protein localises to the cytoplasm. The catalysed reaction is GTP + H2O = GDP + phosphate + H(+). Involved in targeting and insertion of nascent membrane proteins into the cytoplasmic membrane. Binds to the hydrophobic signal sequence of the ribosome-nascent chain (RNC) as it emerges from the ribosomes. The SRP-RNC complex is then targeted to the cytoplasmic membrane where it interacts with the SRP receptor FtsY. The sequence is that of Signal recognition particle 54 kDa protein from Natronomonas pharaonis (strain ATCC 35678 / DSM 2160 / CIP 103997 / JCM 8858 / NBRC 14720 / NCIMB 2260 / Gabara) (Halobacterium pharaonis).